Here is a 514-residue protein sequence, read N- to C-terminus: Prolyl 3,4-dihydroxylase OGFOD1 (514 aa).

Residues 114–221 form the Fe2OG dioxygenase domain; it reads GAVDCSCNIY…RVSISGWFHT (108 aa). Residues His132 and Asp134 each contribute to the Fe cation site. Tyr146 contributes to the 2-oxoglutarate binding site. Residue His200 participates in Fe cation binding. Arg212 lines the 2-oxoglutarate pocket.

The protein belongs to the TPA1 family. Monomer and homodimer. Fe(2+) is required as a cofactor. Requires L-ascorbate as cofactor.

It carries out the reaction [ribosomal protein uS12]-L-proline + 2-oxoglutarate + O2 = [ribosomal protein uS12]-(3S)-3-hydroxy-L-proline + succinate + CO2. It catalyses the reaction [ribosomal protein uS12]-(3S)-3-hydroxy-L-proline + 2-oxoglutarate + O2 = [ribosomal protein uS12]-(3S)-3,4-dihydroxy-L-proline + succinate + CO2. Prolyl 3,4-dihydroxylase that catalyzes 3,4-dihydroxylation of 'Pro-61' of small ribosomal subunit uS12 (RPS23), thereby regulating protein translation termination efficiency. In Ostreococcus tauri, this protein is Prolyl 3,4-dihydroxylase OGFOD1 (Ogd).